The sequence spans 124 residues: MARINQLVRKPRRARAKKSDVPALEGCPQRRGVCTRVYTTTPKKPNSALRKVARVRITNGAEVTAYIGGEGHNLQEHSVVLIRGGRVKDLPGVRYHIVRGSLDTAGVSGRRRGRSKYGEKKPKE.

The tract at residues 1-25 (MARINQLVRKPRRARAKKSDVPALE) is disordered. Asp89 carries the post-translational modification 3-methylthioaspartic acid. Positions 103–124 (DTAGVSGRRRGRSKYGEKKPKE) are disordered.

It belongs to the universal ribosomal protein uS12 family. As to quaternary structure, part of the 30S ribosomal subunit. Contacts proteins S8 and S17. May interact with IF1 in the 30S initiation complex.

With S4 and S5 plays an important role in translational accuracy. In terms of biological role, interacts with and stabilizes bases of the 16S rRNA that are involved in tRNA selection in the A site and with the mRNA backbone. Located at the interface of the 30S and 50S subunits, it traverses the body of the 30S subunit contacting proteins on the other side and probably holding the rRNA structure together. The combined cluster of proteins S8, S12 and S17 appears to hold together the shoulder and platform of the 30S subunit. The sequence is that of Small ribosomal subunit protein uS12 from Coxiella burnetii (strain Dugway 5J108-111).